A 662-amino-acid chain; its full sequence is Biosynthetic arginine decarboxylase (662 aa).

Lys-127 carries the post-translational modification N6-(pyridoxal phosphate)lysine. 307 to 317 is a binding site for substrate; it reads FDVGGGLGVDY.

This sequence belongs to the Orn/Lys/Arg decarboxylase class-II family. SpeA subfamily. As to quaternary structure, homotetramer. The cofactor is Mg(2+). Pyridoxal 5'-phosphate serves as cofactor.

It is found in the periplasm. It catalyses the reaction L-arginine + H(+) = agmatine + CO2. The protein operates within amine and polyamine biosynthesis; agmatine biosynthesis; agmatine from L-arginine: step 1/1. Functionally, catalyzes the biosynthesis of agmatine from arginine. This Shigella flexneri protein is Biosynthetic arginine decarboxylase.